We begin with the raw amino-acid sequence, 298 residues long: NAD kinase (298 aa).

The active-site Proton acceptor is D80. NAD(+) is bound by residues 80-81 (DG), 154-155 (ND), R182, D184, 195-200 (TAYALS), A219, and Q253.

It belongs to the NAD kinase family. The cofactor is a divalent metal cation.

It localises to the cytoplasm. It catalyses the reaction NAD(+) + ATP = ADP + NADP(+) + H(+). Its function is as follows. Involved in the regulation of the intracellular balance of NAD and NADP, and is a key enzyme in the biosynthesis of NADP. Catalyzes specifically the phosphorylation on 2'-hydroxyl of the adenosine moiety of NAD to yield NADP. The chain is NAD kinase from Acidovorax ebreus (strain TPSY) (Diaphorobacter sp. (strain TPSY)).